Here is a 122-residue protein sequence, read N- to C-terminus: Large ribosomal subunit protein uL14 (122 aa).

Belongs to the universal ribosomal protein uL14 family. As to quaternary structure, part of the 50S ribosomal subunit. Forms a cluster with proteins L3 and L19. In the 70S ribosome, L14 and L19 interact and together make contacts with the 16S rRNA in bridges B5 and B8.

In terms of biological role, binds to 23S rRNA. Forms part of two intersubunit bridges in the 70S ribosome. This is Large ribosomal subunit protein uL14 from Thermodesulfovibrio yellowstonii (strain ATCC 51303 / DSM 11347 / YP87).